Reading from the N-terminus, the 184-residue chain is Large ribosomal subunit protein uL15 (184 aa).

Positions 1-50 (MDLSSLRPAKGAVKNKKRVGRGQGSGNGTTAGKGNKGQQARSGYKRPINE) are disordered. The span at 21 to 35 (RGQGSGNGTTAGKGN) shows a compositional bias: gly residues.

Belongs to the universal ribosomal protein uL15 family. Part of the 50S ribosomal subunit.

In terms of biological role, binds to the 23S rRNA. The chain is Large ribosomal subunit protein uL15 from Chlorobium luteolum (strain DSM 273 / BCRC 81028 / 2530) (Pelodictyon luteolum).